Consider the following 617-residue polypeptide: Vacuolar protein sorting-associated protein 33B (617 aa).

This sequence belongs to the STXBP/unc-18/SEC1 family. As to quaternary structure, interacts with vipas39. Widely expressed from 4 hours post-fertilization (hpf) to 24 hpf. At 48 hpf, localized to brain, retina, ear, liver and proximal intestine. This expression pattern is more pronounced at 72 hpf and persists through 5 days post-fertilization (dpf). At 3 dpf and 4 dpf, expression in the liver is predominantly in developing biliary epithelial cells. No expression detected in kidney or spinal cord.

It is found in the late endosome membrane. The protein localises to the lysosome membrane. Functionally, may play a role in vesicle-mediated protein trafficking to lysosomal compartments and in membrane docking/fusion reactions of late endosomes/lysosomes. Required for proper trafficking and targeting of the collagen-modifying enzyme lysyl hydroxylase 3 (LH3) to intracellular collagen. Mediates phagolysosomal fusion in macrophages. Proposed to be involved in endosomal maturation implicating vipas39. In epithelial cells, the vps33b:vipas39 complex may play a role in the apical recycling pathway and in the maintenance of the apical-basolateral polarity. Plays a role in bile duct development. This Danio rerio (Zebrafish) protein is Vacuolar protein sorting-associated protein 33B.